The sequence spans 555 residues: CTP synthase (555 aa).

The segment at 1–267 (MTKFVFVTGG…AQQVLKFMHL (267 aa)) is amidoligase domain. S13 contacts CTP. Residue S13 participates in UTP binding. Residues 14-19 (SIGKGI) and D71 each bind ATP. Mg(2+) contacts are provided by D71 and E141. CTP is bound by residues 148–150 (DIE), 188–193 (KTKPTQ), and K224. Residues 188–193 (KTKPTQ) and K224 each bind UTP. A242 is a binding site for ATP. The 237-residue stretch at 299 to 535 (YVQLSDAYLS…VGACLADNGN (237 aa)) folds into the Glutamine amidotransferase type-1 domain. G354 provides a ligand contact to L-glutamine. The Nucleophile; for glutamine hydrolysis role is filled by C381. L-glutamine contacts are provided by residues 382–385 (LGMQ), E405, and R463. Active-site residues include H508 and E510. Residues 536–555 (NANHHDSTPAEPLVSEPLSS) form a disordered region.

The protein belongs to the CTP synthase family. Homotetramer.

It catalyses the reaction UTP + L-glutamine + ATP + H2O = CTP + L-glutamate + ADP + phosphate + 2 H(+). It carries out the reaction L-glutamine + H2O = L-glutamate + NH4(+). The catalysed reaction is UTP + NH4(+) + ATP = CTP + ADP + phosphate + 2 H(+). It functions in the pathway pyrimidine metabolism; CTP biosynthesis via de novo pathway; CTP from UDP: step 2/2. With respect to regulation, allosterically activated by GTP, when glutamine is the substrate; GTP has no effect on the reaction when ammonia is the substrate. The allosteric effector GTP functions by stabilizing the protein conformation that binds the tetrahedral intermediate(s) formed during glutamine hydrolysis. Inhibited by the product CTP, via allosteric rather than competitive inhibition. In terms of biological role, catalyzes the ATP-dependent amination of UTP to CTP with either L-glutamine or ammonia as the source of nitrogen. Regulates intracellular CTP levels through interactions with the four ribonucleotide triphosphates. This is CTP synthase from Acaryochloris marina (strain MBIC 11017).